A 562-amino-acid chain; its full sequence is Potassium-transporting ATPase potassium-binding subunit (562 aa).

12 helical membrane passes run 6-26, 62-82, 132-152, 170-190, 253-273, 283-303, 327-347, 356-376, 379-399, 416-436, 483-503, and 526-546; these read FLLI…LGSF, YALA…ALLM, GLAV…FALI, VFRI…LFFV, FVQM…FGQV, LIWA…YAEL, FGIL…CGAV, ALGG…FGGV, GLYG…LMIG, MTAL…ALAI, LLLA…VLAI, and LFIG…FVPA.

Belongs to the KdpA family. In terms of assembly, the system is composed of three essential subunits: KdpA, KdpB and KdpC.

Its subcellular location is the cell inner membrane. Functionally, part of the high-affinity ATP-driven potassium transport (or Kdp) system, which catalyzes the hydrolysis of ATP coupled with the electrogenic transport of potassium into the cytoplasm. This subunit binds the periplasmic potassium ions and delivers the ions to the membrane domain of KdpB through an intramembrane tunnel. The sequence is that of Potassium-transporting ATPase potassium-binding subunit from Serratia proteamaculans (strain 568).